Here is a 212-residue protein sequence, read N- to C-terminus: PQMMGIPLILIAIFLPTLLIYTSPTRLSTNRMTTLQLWLTNTITKQLFLPVNTPGHKWAAMLMTLMIXLLSMNLLGLLPYTFTPTTQLSMNMALAIPLWLATVLTGLRNQPTASLGHLLPEGTPTPLIPLLIIIETVSLFIRPLALGVRLTANLTAGHLLIQLISTAAFVLLPMMTLTALSTFIVLVLLTGLEIAVAMIQAYVFTLLLTLYL.

A run of 6 helical transmembrane segments spans residues 3–23, 58–78, 87–107, 128–148, 169–189, and 192–212; these read MMGIPLILIAIFLPTLLIYTS, WAAMLMTLMIXLLSMNLLGLL, QLSMNMALAIPLWLATVLTGL, IPLLIIIETVSLFIRPLALGV, FVLLPMMTLTALSTFIVLVLL, and LEIAVAMIQAYVFTLLLTLYL.

This sequence belongs to the ATPase A chain family. In terms of assembly, component of the ATP synthase complex composed at least of ATP5F1A/subunit alpha, ATP5F1B/subunit beta, ATP5MC1/subunit c (homooctomer), MT-ATP6/subunit a, MT-ATP8/subunit 8, ATP5ME/subunit e, ATP5MF/subunit f, ATP5MG/subunit g, ATP5MK/subunit k, ATP5MJ/subunit j, ATP5F1C/subunit gamma, ATP5F1D/subunit delta, ATP5F1E/subunit epsilon, ATP5PF/subunit F6, ATP5PB/subunit b, ATP5PD/subunit d, ATP5PO/subunit OSCP. ATP synthase complex consists of a soluble F(1) head domain (subunits alpha(3) and beta(3)) - the catalytic core - and a membrane F(0) domain - the membrane proton channel (subunits c, a, 8, e, f, g, k and j). These two domains are linked by a central stalk (subunits gamma, delta, and epsilon) rotating inside the F1 region and a stationary peripheral stalk (subunits F6, b, d, and OSCP). Interacts with DNAJC30; interaction is direct.

Its subcellular location is the mitochondrion inner membrane. The enzyme catalyses H(+)(in) = H(+)(out). Functionally, subunit a, of the mitochondrial membrane ATP synthase complex (F(1)F(0) ATP synthase or Complex V) that produces ATP from ADP in the presence of a proton gradient across the membrane which is generated by electron transport complexes of the respiratory chain. ATP synthase complex consist of a soluble F(1) head domain - the catalytic core - and a membrane F(1) domain - the membrane proton channel. These two domains are linked by a central stalk rotating inside the F(1) region and a stationary peripheral stalk. During catalysis, ATP synthesis in the catalytic domain of F(1) is coupled via a rotary mechanism of the central stalk subunits to proton translocation. With the subunit c (ATP5MC1), forms the proton-conducting channel in the F(0) domain, that contains two crucial half-channels (inlet and outlet) that facilitate proton movement from the mitochondrial intermembrane space (IMS) into the matrix. Protons are taken up via the inlet half-channel and released through the outlet half-channel, following a Grotthuss mechanism. The protein is ATP synthase F(0) complex subunit a of Tropidurus hispidus (Peters' lava lizard).